A 170-amino-acid polypeptide reads, in one-letter code: Acireductone dioxygenase (170 aa).

Fe(2+)-binding residues include histidine 99, histidine 101, glutamate 105, and histidine 144. Residues histidine 99, histidine 101, glutamate 105, and histidine 144 each contribute to the Ni(2+) site.

Belongs to the acireductone dioxygenase (ARD) family. In terms of assembly, monomer. Requires Fe(2+) as cofactor. It depends on Ni(2+) as a cofactor.

The catalysed reaction is 1,2-dihydroxy-5-(methylsulfanyl)pent-1-en-3-one + O2 = 3-(methylsulfanyl)propanoate + CO + formate + 2 H(+). It catalyses the reaction 1,2-dihydroxy-5-(methylsulfanyl)pent-1-en-3-one + O2 = 4-methylsulfanyl-2-oxobutanoate + formate + 2 H(+). Its pathway is amino-acid biosynthesis; L-methionine biosynthesis via salvage pathway; L-methionine from S-methyl-5-thio-alpha-D-ribose 1-phosphate: step 5/6. Catalyzes 2 different reactions between oxygen and the acireductone 1,2-dihydroxy-3-keto-5-methylthiopentene (DHK-MTPene) depending upon the metal bound in the active site. Fe-containing acireductone dioxygenase (Fe-ARD) produces formate and 2-keto-4-methylthiobutyrate (KMTB), the alpha-ketoacid precursor of methionine in the methionine recycle pathway. Ni-containing acireductone dioxygenase (Ni-ARD) produces methylthiopropionate, carbon monoxide and formate, and does not lie on the methionine recycle pathway. This Bacillus anthracis protein is Acireductone dioxygenase.